We begin with the raw amino-acid sequence, 210 residues long: Mediator of RNA polymerase II transcription subunit 20 (210 aa).

This sequence belongs to the Mediator complex subunit 20 family. In terms of assembly, component of the Mediator complex, which is composed of at least 21 subunits that form three structurally distinct submodules. The Mediator head module contains MED6, MED8, MED11, SRB4/MED17, SRB5/MED18, ROX3/MED19, SRB2/MED20 and SRB6/MED22, the middle module contains MED1, MED4, NUT1/MED5, MED7, CSE2/MED9, NUT2/MED10, SRB7/MED21 and SOH1/MED31, and the tail module contains MED2, PGD1/MED3, RGR1/MED14, GAL11/MED15 and SIN4/MED16. The head and the middle modules interact directly with RNA polymerase II, whereas the elongated tail module interacts with gene-specific regulatory proteins. MED1 interacts directly with MED4 and MED7. SRB2/MED20 interacts directly with SRB4/MED17 and SRB5/MED18.

It is found in the nucleus. In terms of biological role, component of the Mediator complex, a coactivator involved in the regulated transcription of nearly all RNA polymerase II-dependent genes. Mediator functions as a bridge to convey information from gene-specific regulatory proteins to the basal RNA polymerase II transcription machinery. The Mediator complex, having a compact conformation in its free form, is recruited to promoters by direct interactions with regulatory proteins and serves for the assembly of a functional preinitiation complex with RNA polymerase II and the general transcription factors. The Mediator complex unfolds to an extended conformation and partially surrounds RNA polymerase II, specifically interacting with the unphosphorylated form of the C-terminal domain (CTD) of RNA polymerase II. The Mediator complex dissociates from the RNA polymerase II holoenzyme and stays at the promoter when transcriptional elongation begins. This Saccharomyces cerevisiae (strain ATCC 204508 / S288c) (Baker's yeast) protein is Mediator of RNA polymerase II transcription subunit 20 (SRB2).